Consider the following 487-residue polypeptide: Sodium-coupled neutral amino acid symporter 1 (487 aa).

The Cytoplasmic segment spans residues Met-1–Gly-74. Ser-6 is subject to Phosphoserine. Thr-11 is subject to Phosphothreonine. Phosphoserine occurs at positions 25, 28, 49, and 52. Thr-54 carries the post-translational modification Phosphothreonine. At Ser-56 the chain carries Phosphoserine. Residues Met-75–Ala-97 traverse the membrane as a helical segment. The Extracellular portion of the chain corresponds to Asn-98–Thr-112. The helical transmembrane segment at Leu-113–Val-133 threads the bilayer. The Cytoplasmic portion of the chain corresponds to Tyr-134–Lys-147. Residues Phe-148–Ile-168 traverse the membrane as a helical segment. At Val-169–Ser-188 the chain is on the extracellular side. A helical transmembrane segment spans residues Ala-189–Leu-211. At Leu-212–Gly-216 the chain is on the cytoplasmic side. A helical membrane pass occupies residues Tyr-217 to Ile-237. Residues Tyr-238 to Thr-275 are Extracellular-facing. Cys-245 and Cys-264 form a disulfide bridge. N-linked (GlcNAc...) asparagine glycosylation is found at Asn-251 and Asn-257. A helical transmembrane segment spans residues Val-276 to Tyr-296. Topologically, residues Ser-297–Asn-312 are cytoplasmic. The chain crosses the membrane as a helical span at residues Ile-313–Phe-333. The Extracellular portion of the chain corresponds to Tyr-334–Asp-350. A helical membrane pass occupies residues Ile-351–Leu-371. The Cytoplasmic segment spans residues Phe-372–His-393. A helical transmembrane segment spans residues Thr-394–Met-414. At Lys-415–Asp-416 the chain is on the extracellular side. The helical transmembrane segment at Ile-417 to Leu-437 threads the bilayer. The Cytoplasmic portion of the chain corresponds to Tyr-438–Arg-452. The chain crosses the membrane as a helical span at residues Ile-453–Val-473. The Extracellular segment spans residues Ile-474 to His-487.

It belongs to the amino acid/polyamine transporter 2 family. In terms of processing, N-glycosylation plays an important role in the L-glutamine transport. In terms of tissue distribution, expressed in the cerebral cortex by pyramidal and GABAergic neurons, astrocytes and other non-neuronal cells (at protein level). Expressed in placenta, heart, lung, skeletal muscle, spleen, stomach and testis. Highly expressed in cytotrophoblast cells from term placenta.

The protein localises to the cell membrane. It catalyses the reaction L-glutamine(in) + Na(+)(in) = L-glutamine(out) + Na(+)(out). The enzyme catalyses L-alanine(in) + Na(+)(in) = L-alanine(out) + Na(+)(out). It carries out the reaction L-asparagine(in) + Na(+)(in) = L-asparagine(out) + Na(+)(out). The catalysed reaction is L-histidine(in) + Na(+)(in) = L-histidine(out) + Na(+)(out). It catalyses the reaction L-serine(in) + Na(+)(in) = L-serine(out) + Na(+)(out). The enzyme catalyses L-cysteine(in) + Na(+)(in) = L-cysteine(out) + Na(+)(out). It carries out the reaction L-methionine(in) + Na(+)(in) = L-methionine(out) + Na(+)(out). The catalysed reaction is glycine(in) + Na(+)(in) = glycine(out) + Na(+)(out). It catalyses the reaction L-threonine(in) + Na(+)(in) = L-threonine(out) + Na(+)(out). The enzyme catalyses L-proline(in) + Na(+)(in) = L-proline(out) + Na(+)(out). Its activity is regulated as follows. Inhibited by alpha-(methylamino)isobutyric acid (MeAIB). Inhibited by lithium, potassium, choline ions, N-methylglucamine. The pH dependence has an allosteric effect on the transport. In terms of biological role, symporter that cotransports short-chain neutral amino acids and sodium ions from the extraccellular to the intracellular side of the cell membrane. The transport is elctrogenic, pH dependent and driven by the Na(+) electrochemical gradient. Participates in the astroglia-derived glutamine transport into GABAergic interneurons for neurotransmitter GABA de novo synthesis. May also contributes to amino acid transport in placental trophoblasts. Also regulates synaptic plasticity. The polypeptide is Sodium-coupled neutral amino acid symporter 1 (SLC38A1) (Homo sapiens (Human)).